Here is a 418-residue protein sequence, read N- to C-terminus: MQALVLLLCIGALLGHSSCQNPASPPEEGSPDPDSTGALVEEEDPFFKVPVNKLAAAVSNFGYDLYRVRSSTSPTTNVLLSPLSVATALSALSLGAEQRTESIIHRALYYDLISSPDIHGTYKELLDTVTAPQKNLKSASRIVFEKKLRIKSSFVAPLEKSYGTRPRVLTGNPRLDLQEINNWVQAQMKGKLARSTKEIPDEISILLLGVAHFKGQWVTKFDSRKTSLEDFYLDEERTVRVPMMSDPKAVLRYGLDSDLSCKIAQLPLTGSMSIIFFLPLKVTQNLTLIEESLTSEFIHDIDRELKTVQAVLTVPKLKLSYEGEVTKSLQEMKLQSLFDSPDFSKITGKPIKLTQVEHRAGFEWNEDGAGTTPSPGLQPAHLTFPLDYHLNQPFIFVLRDTDTGALLFIGKILDPRGP.

The signal sequence occupies residues Met1–Cys19. A Pyrrolidone carboxylic acid modification is found at Gln20. The tract at residues Gln20–Leu39 is disordered. Phosphoserine; by CK2 occurs at positions 24 and 114. Phosphoserine; by PKA is present on Ser227. N-linked (GlcNAc...) (complex) asparagine glycosylation occurs at Asn285. The tract at residues Thr371–Thr383 is O-glycosylated at one site.

The protein belongs to the serpin family. As to quaternary structure, interacts with PNPLA2; this interaction stimulates the phospholipase A2 activity of PNPLA2. In terms of processing, the N-terminus is blocked. Extracellular phosphorylation enhances antiangiogenic activity. Post-translationally, N- and O-glycosylated. O-glycosylated with a core 1 or possibly core 8 glycan. As to expression, retinal pigment epithelial cells and blood plasma.

Its subcellular location is the secreted. It localises to the melanosome. Functionally, neurotrophic protein; induces extensive neuronal differentiation in retinoblastoma cells. Potent inhibitor of angiogenesis. As it does not undergo the S (stressed) to R (relaxed) conformational transition characteristic of active serpins, it exhibits no serine protease inhibitory activity. The sequence is that of Pigment epithelium-derived factor (SERPINF1) from Homo sapiens (Human).